We begin with the raw amino-acid sequence, 352 residues long: Photosystem II D2 protein (352 aa).

T2 bears the N-acetylthreonine mark. At T2 the chain carries Phosphothreonine. Residues C40–T60 traverse the membrane as a helical segment. H117 is a chlorophyll a binding site. A helical membrane pass occupies residues G124–P140. Residues Q129 and N142 each contribute to the pheophytin a site. The helical transmembrane segment at V152–S165 threads the bilayer. Residue H197 coordinates chlorophyll a. The chain crosses the membrane as a helical span at residues A207–D227. Residues H214 and F261 each coordinate a plastoquinone. H214 provides a ligand contact to Fe cation. H268 provides a ligand contact to Fe cation. The chain crosses the membrane as a helical span at residues G278 to R294.

This sequence belongs to the reaction center PufL/M/PsbA/D family. In terms of assembly, PSII is composed of 1 copy each of membrane proteins PsbA, PsbB, PsbC, PsbD, PsbE, PsbF, PsbH, PsbI, PsbJ, PsbK, PsbL, PsbM, PsbT, PsbX, PsbY, PsbZ, Psb30/Ycf12, at least 3 peripheral proteins of the oxygen-evolving complex and a large number of cofactors. It forms dimeric complexes. The cofactor is The D1/D2 heterodimer binds P680, chlorophylls that are the primary electron donor of PSII, and subsequent electron acceptors. It shares a non-heme iron and each subunit binds pheophytin, quinone, additional chlorophylls, carotenoids and lipids. There is also a Cl(-1) ion associated with D1 and D2, which is required for oxygen evolution. The PSII complex binds additional chlorophylls, carotenoids and specific lipids..

The protein resides in the plastid. It localises to the chloroplast thylakoid membrane. The enzyme catalyses 2 a plastoquinone + 4 hnu + 2 H2O = 2 a plastoquinol + O2. Its function is as follows. Photosystem II (PSII) is a light-driven water:plastoquinone oxidoreductase that uses light energy to abstract electrons from H(2)O, generating O(2) and a proton gradient subsequently used for ATP formation. It consists of a core antenna complex that captures photons, and an electron transfer chain that converts photonic excitation into a charge separation. The D1/D2 (PsbA/PsbD) reaction center heterodimer binds P680, the primary electron donor of PSII as well as several subsequent electron acceptors. D2 is needed for assembly of a stable PSII complex. This Nephroselmis olivacea (Green alga) protein is Photosystem II D2 protein.